The chain runs to 281 residues: Sulfur carrier protein FdhD (281 aa).

C117 acts as the Cysteine persulfide intermediate in catalysis.

It belongs to the FdhD family.

Its subcellular location is the cytoplasm. Its function is as follows. Required for formate dehydrogenase (FDH) activity. Acts as a sulfur carrier protein that transfers sulfur from IscS to the molybdenum cofactor prior to its insertion into FDH. The protein is Sulfur carrier protein FdhD of Xanthomonas euvesicatoria pv. vesicatoria (strain 85-10) (Xanthomonas campestris pv. vesicatoria).